We begin with the raw amino-acid sequence, 373 residues long: Flap endonuclease 1 (373 aa).

The N-domain stretch occupies residues 1-105 (MGIKGLNALI…GELEKRLKRR (105 aa)). Asp34 is a Mg(2+) binding site. Positions 47 and 71 each coordinate DNA. 5 residues coordinate Mg(2+): Asp87, Glu159, Glu161, Asp180, and Asp182. Residues 123–254 (DIAKFERRTV…VTAFKLIKEH (132 aa)) are I-domain. Glu159 lines the DNA pocket. The DNA site is built by Gly232 and Asp234. Asp234 is a binding site for Mg(2+). The interval 340–348 (TQGRLDKFF) is interaction with PCNA. The disordered stretch occupies residues 347-373 (FFVVKKRPAEEKKGKNTKEEKPKKKRK).

Belongs to the XPG/RAD2 endonuclease family. FEN1 subfamily. Interacts with PCNA. Three molecules of FEN1 bind to one PCNA trimer with each molecule binding to one PCNA monomer. PCNA stimulates the nuclease activity without altering cleavage specificity. Mg(2+) is required as a cofactor. In terms of processing, phosphorylated. Phosphorylation upon DNA damage induces relocalization to the nuclear plasma.

Its subcellular location is the nucleus. It is found in the nucleolus. It localises to the nucleoplasm. The protein resides in the mitochondrion. Its function is as follows. Structure-specific nuclease with 5'-flap endonuclease and 5'-3' exonuclease activities involved in DNA replication and repair. During DNA replication, cleaves the 5'-overhanging flap structure that is generated by displacement synthesis when DNA polymerase encounters the 5'-end of a downstream Okazaki fragment. It enters the flap from the 5'-end and then tracks to cleave the flap base, leaving a nick for ligation. Also involved in the long patch base excision repair (LP-BER) pathway, by cleaving within the apurinic/apyrimidinic (AP) site-terminated flap. Acts as a genome stabilization factor that prevents flaps from equilibrating into structures that lead to duplications and deletions. Also possesses 5'-3' exonuclease activity on nicked or gapped double-stranded DNA, and exhibits RNase H activity. Also involved in replication and repair of rDNA and in repairing mitochondrial DNA. This is Flap endonuclease 1 from Komagataella phaffii (strain GS115 / ATCC 20864) (Yeast).